Consider the following 367-residue polypeptide: Glutamate 5-kinase (367 aa).

Lys10 serves as a coordination point for ATP. 3 residues coordinate substrate: Ser50, Asp137, and Asn149. ATP-binding positions include 169–170 (TD) and 211–217 (TGGMATK). The PUA domain occupies 275–353 (AGEITVDDGA…QQISEILGYE (79 aa)).

Belongs to the glutamate 5-kinase family.

The protein localises to the cytoplasm. It catalyses the reaction L-glutamate + ATP = L-glutamyl 5-phosphate + ADP. It functions in the pathway amino-acid biosynthesis; L-proline biosynthesis; L-glutamate 5-semialdehyde from L-glutamate: step 1/2. In terms of biological role, catalyzes the transfer of a phosphate group to glutamate to form L-glutamate 5-phosphate. The protein is Glutamate 5-kinase of Yersinia enterocolitica serotype O:8 / biotype 1B (strain NCTC 13174 / 8081).